Reading from the N-terminus, the 309-residue chain is MRRITPFFPFFVLLVSHFSLAISYPLPPEGSRLVGQPVTIAVPQNNTQPLESFAARYGQGLSNMLEANPGVDVFLPQSGSTLVVPQQLILPDTVREGIVVNVAEMRLYYYPAGTNTVEVLPIGIGQAGRETPRNWVTAVERKQDGPVWVPTANTRREYAKEGKTLPAMVPAGPDNPMGLYAIYIGRLYAIHGTNANFGIGLRVSQGCIRLRNDDIKYLFDHVPVGTRVQIIDRPVKFSVEPDGSRWLEVHEPLSRNRAEFESDKKVPLPVTPVLRTFIKGDDVDTSRVNEVLERRSGMPVNISAGRPGL.

Residues 1-21 form the signal peptide; sequence MRRITPFFPFFVLLVSHFSLA. The L,D-TPase catalytic domain occupies 96 to 231; the sequence is EGIVVNVAEM…VPVGTRVQII (136 aa). The active-site Proton donor/acceptor is the His-191. The Nucleophile role is filled by Cys-207.

Belongs to the YkuD family.

Its subcellular location is the periplasm. It functions in the pathway cell wall biogenesis; peptidoglycan biosynthesis. The polypeptide is Probable L,D-transpeptidase ErfK/SrfK (erfK) (Salmonella typhimurium (strain LT2 / SGSC1412 / ATCC 700720)).